The primary structure comprises 212 residues: ECF RNA polymerase sigma factor SigD (212 aa).

The sigma-70 factor domain-2 stretch occupies residues 49-119 (ETIRPIVVRY…VADAHRAAGR (71 aa)). Positions 75-78 (DVAQ) match the Polymerase core binding motif. The interval 152–201 (NELLEILPAKQREILILRVVVGLSAEETAAAVGSTTGAVRVAQHRALQRL) is sigma-70 factor domain-4. Positions 176 to 195 (AEETAAAVGSTTGAVRVAQH) form a DNA-binding region, H-T-H motif.

It belongs to the sigma-70 factor family. ECF subfamily. As to quaternary structure, interacts transiently with the RNA polymerase catalytic core formed by RpoA, RpoB, RpoC and RpoZ (2 alpha, 1 beta, 1 beta' and 1 omega subunit) to form the RNA polymerase holoenzyme that can initiate transcription. Interacts (via sigma-70 factor domain 4) with RsdA.

Its function is as follows. Sigma factors are initiation factors that promote the attachment of RNA polymerase to specific initiation sites and are then released. Extracytoplasmic function (ECF) sigma factors are held in an inactive form by an anti-sigma factor until released by regulated intramembrane proteolysis. The protein is ECF RNA polymerase sigma factor SigD (sigD) of Mycobacterium bovis (strain ATCC BAA-935 / AF2122/97).